The following is a 157-amino-acid chain: Transcription elongation factor GreB (157 aa).

The protein belongs to the GreA/GreB family. GreB subfamily.

In terms of biological role, necessary for efficient RNA polymerase transcription elongation past template-encoded arresting sites. The arresting sites in DNA have the property of trapping a certain fraction of elongating RNA polymerases that pass through, resulting in locked ternary complexes. Cleavage of the nascent transcript by cleavage factors such as GreA or GreB allows the resumption of elongation from the new 3'terminus. GreB releases sequences of up to 9 nucleotides in length. The protein is Transcription elongation factor GreB of Salmonella typhi.